Here is a 248-residue protein sequence, read N- to C-terminus: PF03932 family protein CutC (248 aa).

It belongs to the CutC family.

The protein localises to the cytoplasm. This chain is PF03932 family protein CutC, found in Porphyromonas gingivalis (strain ATCC 33277 / DSM 20709 / CIP 103683 / JCM 12257 / NCTC 11834 / 2561).